Reading from the N-terminus, the 435-residue chain is 5-methylthioadenosine/S-adenosylhomocysteine deaminase (435 aa).

The Zn(2+) site is built by histidine 65 and histidine 67. Residues glutamate 94, arginine 150, and histidine 189 each coordinate substrate. Histidine 216 contacts Zn(2+). Substrate is bound by residues glutamate 219 and aspartate 304. Zn(2+) is bound at residue aspartate 304.

It belongs to the metallo-dependent hydrolases superfamily. MTA/SAH deaminase family. The cofactor is Zn(2+).

The enzyme catalyses S-adenosyl-L-homocysteine + H2O + H(+) = S-inosyl-L-homocysteine + NH4(+). The catalysed reaction is S-methyl-5'-thioadenosine + H2O + H(+) = S-methyl-5'-thioinosine + NH4(+). In terms of biological role, catalyzes the deamination of 5-methylthioadenosine and S-adenosyl-L-homocysteine into 5-methylthioinosine and S-inosyl-L-homocysteine, respectively. Is also able to deaminate adenosine. The polypeptide is 5-methylthioadenosine/S-adenosylhomocysteine deaminase (Bacillus cereus (strain AH187)).